Reading from the N-terminus, the 149-residue chain is Calmodulin-2 (149 aa).

EF-hand domains lie at Asp-8–Asn-43, Pro-44–Asp-79, Asp-81–Lys-116, and Leu-117–Lys-149. Positions 21, 23, 25, 27, 32, 57, 59, 61, 63, 68, 94, 96, 98, 105, 130, 132, 134, 136, and 141 each coordinate Ca(2+).

It belongs to the calmodulin family. Interacts with KCBP and CIP111. Binds to IQD1 and IQD20.

The protein localises to the cytoplasm. It is found in the cytoskeleton. Calmodulin mediates the control of a large number of enzymes, ion channels and other proteins by Ca(2+). Among the enzymes to be stimulated by the calmodulin-Ca(2+) complex are a number of protein kinases and phosphatases. The protein is Calmodulin-2 (CAM2) of Arabidopsis thaliana (Mouse-ear cress).